A 580-amino-acid polypeptide reads, in one-letter code: Multidrug resistance-like ATP-binding protein MdlB (580 aa).

In terms of domain architecture, ABC transmembrane type-1 spans 25 to 310 (IILAFFLLLS…ITIQQSILQQ (286 aa)). A run of 5 helical transmembrane segments spans residues 26–46 (ILAFFLLLSGATSEVLGPILI), 61–81 (FQLILIIIVIFIMLQILAVFF), 142–162 (VGPTFFRSITLIIIILFAMFT), 165–185 (WHMAIITIFIIPLVIIVMSIY), and 258–278 (LLSALVLCSFMFLFSYFSIGV). The region spanning 341–575 (INIKNLSFKY…KGFYWKMYNF (235 aa)) is the ABC transporter domain. 375–382 (GQTGSGKS) lines the ATP pocket.

Belongs to the ABC transporter superfamily. Drug exporter-2 (TC 3.A.1.117) family.

The protein localises to the cell membrane. The enzyme catalyses ATP + H2O + xenobioticSide 1 = ADP + phosphate + xenobioticSide 2.. This Buchnera aphidicola subsp. Schizaphis graminum (strain Sg) protein is Multidrug resistance-like ATP-binding protein MdlB (mdlB).